Reading from the N-terminus, the 489-residue chain is Rhamnulokinase (489 aa).

13 to 17 (ASSGR) lines the ATP pocket. A disulfide bond links C68 and C222. Substrate is bound by residues G83 and 236–238 (HDT). The Proton acceptor role is filled by D237. T259 provides a ligand contact to ATP. Position 296 (N296) interacts with substrate. Q304 is a binding site for ATP. Residues C353 and C370 are joined by a disulfide bond. G402 serves as a coordination point for ATP. C413 and C417 form a disulfide bridge.

This sequence belongs to the rhamnulokinase family. Mg(2+) serves as cofactor.

The catalysed reaction is L-rhamnulose + ATP = L-rhamnulose 1-phosphate + ADP + H(+). It functions in the pathway carbohydrate degradation; L-rhamnose degradation; glycerone phosphate from L-rhamnose: step 2/3. Involved in the catabolism of L-rhamnose (6-deoxy-L-mannose). Catalyzes the transfer of the gamma-phosphate group from ATP to the 1-hydroxyl group of L-rhamnulose to yield L-rhamnulose 1-phosphate. The chain is Rhamnulokinase from Salmonella dublin (strain CT_02021853).